A 611-amino-acid chain; its full sequence is Acetylcholinesterase (611 aa).

Residues 1-31 (MRPPWCPLYTPSLAAPILLLLLFLLGGGAEA) form the signal peptide. Cysteine 97 and cysteine 124 are disulfide-bonded. Residue serine 231 is the Acyl-ester intermediate of the active site. An intrachain disulfide couples cysteine 285 to cysteine 300. Asparagine 293 carries N-linked (GlcNAc...) asparagine glycosylation. The active-site Charge relay system is the glutamate 362. The N-linked (GlcNAc...) asparagine glycan is linked to asparagine 378. A disulfide bridge connects residues cysteine 437 and cysteine 557. The Charge relay system role is filled by histidine 475. The N-linked (GlcNAc...) asparagine glycan is linked to asparagine 492.

Belongs to the type-B carboxylesterase/lipase family. Interacts with PRIMA1. The interaction with PRIMA1 is required to anchor it to the basal lamina of cells and organize into tetramers. Isoform H generates GPI-anchored dimers; disulfide linked. Isoform T generates multiple structures, ranging from monomers and dimers to collagen-tailed and hydrophobic-tailed forms, in which catalytic tetramers are associated with anchoring proteins that attach them to the basal lamina or to cell membranes. In the collagen-tailed forms, isoform T subunits are associated with a specific collagen, COLQ, which triggers the formation of isoform T tetramers, from monomers and dimers.

It localises to the synapse. The protein resides in the secreted. Its subcellular location is the cell membrane. The enzyme catalyses acetylcholine + H2O = choline + acetate + H(+). Functionally, terminates signal transduction at the neuromuscular junction by rapid hydrolysis of the acetylcholine released into the synaptic cleft. The sequence is that of Acetylcholinesterase (ACHE) from Felis catus (Cat).